The primary structure comprises 270 residues: Formamidopyrimidine-DNA glycosylase (270 aa).

Pro-2 serves as the catalytic Schiff-base intermediate with DNA. Glu-3 serves as the catalytic Proton donor. Residue Lys-58 is the Proton donor; for beta-elimination activity of the active site. His-91, Arg-110, and Lys-151 together coordinate DNA. Residues Leu-236–Arg-270 form an FPG-type zinc finger. The Proton donor; for delta-elimination activity role is filled by Arg-260.

It belongs to the FPG family. Monomer. Zn(2+) is required as a cofactor.

It catalyses the reaction Hydrolysis of DNA containing ring-opened 7-methylguanine residues, releasing 2,6-diamino-4-hydroxy-5-(N-methyl)formamidopyrimidine.. The catalysed reaction is 2'-deoxyribonucleotide-(2'-deoxyribose 5'-phosphate)-2'-deoxyribonucleotide-DNA = a 3'-end 2'-deoxyribonucleotide-(2,3-dehydro-2,3-deoxyribose 5'-phosphate)-DNA + a 5'-end 5'-phospho-2'-deoxyribonucleoside-DNA + H(+). Involved in base excision repair of DNA damaged by oxidation or by mutagenic agents. Acts as a DNA glycosylase that recognizes and removes damaged bases. Has a preference for oxidized purines, such as 7,8-dihydro-8-oxoguanine (8-oxoG). Has AP (apurinic/apyrimidinic) lyase activity and introduces nicks in the DNA strand. Cleaves the DNA backbone by beta-delta elimination to generate a single-strand break at the site of the removed base with both 3'- and 5'-phosphates. The sequence is that of Formamidopyrimidine-DNA glycosylase from Marinobacter nauticus (strain ATCC 700491 / DSM 11845 / VT8) (Marinobacter aquaeolei).